The following is a 130-amino-acid chain: Small ribosomal subunit protein uS9 (130 aa).

The disordered stretch occupies residues 98–130 (LKRAGLLTRDPRMKERKKPGLKKARRSPQFSKR). The span at 111-130 (KERKKPGLKKARRSPQFSKR) shows a compositional bias: basic residues.

It belongs to the universal ribosomal protein uS9 family.

This is Small ribosomal subunit protein uS9 from Staphylococcus haemolyticus (strain JCSC1435).